The chain runs to 214 residues: Pyridoxine/pyridoxamine 5'-phosphate oxidase (214 aa).

Residues 8 to 11 (RKSY) and Lys-67 contribute to the substrate site. Residues 62–67 (RVVLLK), 77–78 (YT), Lys-84, and Gln-106 each bind FMN. Substrate-binding residues include Tyr-124, Arg-128, and Ser-132. FMN is bound by residues 141 to 142 (QS) and Trp-186. 192-194 (RLH) serves as a coordination point for substrate. Arg-196 provides a ligand contact to FMN.

The protein belongs to the pyridoxamine 5'-phosphate oxidase family. In terms of assembly, homodimer. It depends on FMN as a cofactor.

The catalysed reaction is pyridoxamine 5'-phosphate + O2 + H2O = pyridoxal 5'-phosphate + H2O2 + NH4(+). It carries out the reaction pyridoxine 5'-phosphate + O2 = pyridoxal 5'-phosphate + H2O2. It functions in the pathway cofactor metabolism; pyridoxal 5'-phosphate salvage; pyridoxal 5'-phosphate from pyridoxamine 5'-phosphate: step 1/1. It participates in cofactor metabolism; pyridoxal 5'-phosphate salvage; pyridoxal 5'-phosphate from pyridoxine 5'-phosphate: step 1/1. Functionally, catalyzes the oxidation of either pyridoxine 5'-phosphate (PNP) or pyridoxamine 5'-phosphate (PMP) into pyridoxal 5'-phosphate (PLP). The protein is Pyridoxine/pyridoxamine 5'-phosphate oxidase of Flavobacterium johnsoniae (strain ATCC 17061 / DSM 2064 / JCM 8514 / BCRC 14874 / CCUG 350202 / NBRC 14942 / NCIMB 11054 / UW101) (Cytophaga johnsonae).